Consider the following 65-residue polypeptide: Large ribosomal subunit protein bL35 (65 aa).

The protein belongs to the bacterial ribosomal protein bL35 family.

The protein is Large ribosomal subunit protein bL35 of Clostridium kluyveri (strain NBRC 12016).